A 330-amino-acid polypeptide reads, in one-letter code: DNA primase small subunit PriS (330 aa).

Catalysis depends on residues Asp101 and Asp103. Residues Cys116, Cys119, Cys128, and Asp131 each coordinate Zn(2+). Residue Asp235 is part of the active site.

Belongs to the eukaryotic-type primase small subunit family. As to quaternary structure, heterodimer of a small subunit (PriS) and a large subunit (PriL). Requires Mg(2+) as cofactor. Mn(2+) serves as cofactor.

Catalytic subunit of DNA primase, an RNA polymerase that catalyzes the synthesis of short RNA molecules used as primers for DNA polymerase during DNA replication. The small subunit contains the primase catalytic core and has DNA synthesis activity on its own. Binding to the large subunit stabilizes and modulates the activity, increasing the rate of DNA synthesis while decreasing the length of the DNA fragments, and conferring RNA synthesis capability. The DNA polymerase activity may enable DNA primase to also catalyze primer extension after primer synthesis. May also play a role in DNA repair. This chain is DNA primase small subunit PriS, found in Saccharolobus islandicus (strain Y.N.15.51 / Yellowstone #2) (Sulfolobus islandicus).